Here is a 716-residue protein sequence, read N- to C-terminus: Calpain clp-4 (716 aa).

Positions 31–53 are disordered; that stretch reads DDDDKQEAPVAVSKAPKGKGSNH. A Calpain catalytic domain is found at 240–536; it reads LFEDPEFPAT…FTQMEVCNLT (297 aa). Residues Cys295, His452, and Asn476 contribute to the active site.

This sequence belongs to the peptidase C2 family.

Its function is as follows. Calcium-regulated non-lysosomal thiol-protease which catalyzes limited proteolysis of substrates. Promotes starvation-induced muscle atrophy. The protein is Calpain clp-4 of Caenorhabditis elegans.